A 197-amino-acid chain; its full sequence is Molybdenum cofactor guanylyltransferase (197 aa).

Residues 10 to 12, Lys23, Asn51, Asp69, and Asp99 each bind GTP; that span reads LAG. Asp99 serves as a coordination point for Mg(2+).

This sequence belongs to the MobA family. As to quaternary structure, monomer. Mg(2+) serves as cofactor.

It is found in the cytoplasm. The catalysed reaction is Mo-molybdopterin + GTP + H(+) = Mo-molybdopterin guanine dinucleotide + diphosphate. Its function is as follows. Transfers a GMP moiety from GTP to Mo-molybdopterin (Mo-MPT) cofactor (Moco or molybdenum cofactor) to form Mo-molybdopterin guanine dinucleotide (Mo-MGD) cofactor. The sequence is that of Molybdenum cofactor guanylyltransferase from Shewanella sp. (strain MR-4).